Reading from the N-terminus, the 263-residue chain is Probable ABC transporter permease protein ycf63 (263 aa).

6 consecutive transmembrane segments (helical) span residues 43–63, 82–102, 136–156, 159–179, 199–219, and 230–250; these read LVGP…SMVF, AVIV…VIIA, LVFP…TISL, SIAI…SIFL, LCFG…SSGG, and SVVT…YFMF.

This sequence belongs to the MlaE permease family.

It localises to the plastid. Its subcellular location is the chloroplast membrane. Functionally, could be part of an ABC transporter complex. This Porphyra purpurea (Red seaweed) protein is Probable ABC transporter permease protein ycf63 (ycf63).